A 438-amino-acid chain; its full sequence is Chaperone SurA (438 aa).

Residues 1–28 form the signal peptide; the sequence is MKTMNPYIRHLILLICCLGGMLAQPLSA. PpiC domains are found at residues 181-282 and 292-390; these read EEEY…KLVS and VQQT…QVLE.

The protein localises to the periplasm. It catalyses the reaction [protein]-peptidylproline (omega=180) = [protein]-peptidylproline (omega=0). Its function is as follows. Chaperone involved in the correct folding and assembly of outer membrane proteins. Recognizes specific patterns of aromatic residues and the orientation of their side chains, which are found more frequently in integral outer membrane proteins. May act in both early periplasmic and late outer membrane-associated steps of protein maturation. This Dechloromonas aromatica (strain RCB) protein is Chaperone SurA.